The sequence spans 240 residues: Sugar fermentation stimulation protein homolog (240 aa).

The protein belongs to the SfsA family.

This Methanothermobacter thermautotrophicus (strain ATCC 29096 / DSM 1053 / JCM 10044 / NBRC 100330 / Delta H) (Methanobacterium thermoautotrophicum) protein is Sugar fermentation stimulation protein homolog.